We begin with the raw amino-acid sequence, 715 residues long: Putative pentatricopeptide repeat-containing protein At3g23330 (715 aa).

PPR repeat units lie at residues 38–68 (SHTS…LKSP), 69–103 (PVLA…GRCP), 104–138 (DHNV…GMDC), 139–172 (DLYT…MPQR), 206–240 (DVVS…DLKP), 241–275 (DSFT…GIDS), 276–306 (DVYI…LYCR), 307–341 (DGIS…KVKP), 342–376 (GAVA…GFGS), 377–407 (NIFI…MNVL), 408–442 (DEVS…GVKP), 443–473 (NQVA…MTKV), and 479–509 (ELEH…MCVE). The tract at residues 514 to 589 (VWSTLLSSCS…KPACSWIEMK (76 aa)) is type E motif. Residues 590–620 (NKTHGFVSGDRSHPSMDKINEFLKAVMEQME) are type E(+) motif. Residues 621–715 (KEGYVADTSG…RGNCSCGDYW (95 aa)) form a type DYW motif region.

It belongs to the PPR family. PCMP-H subfamily.

In Arabidopsis thaliana (Mouse-ear cress), this protein is Putative pentatricopeptide repeat-containing protein At3g23330 (PCMP-H32).